The following is a 220-amino-acid chain: MSLNFFDQFMSPTLLGVPLIAVAMMFPWTLLPTPTNRWLNNRTLTLQNWFIGRFTNQLLQPLNTGGHKWAMILMSLNLLGLLPYTFTPTTQLSLNMGLAIPFWLATVLLGLRNQPTAALGHLLPEGTPTLLIPILIIIETISLLIRPFALGVRLTANLTAGHLLMQLIATAAFVLLPMMPTVALLTTLVLFLLTLLEIAVAMIQAYVFVLLLSLYLQENV.

Helical transmembrane passes span proline 12–proline 32, tryptophan 69–threonine 89, glutamine 91–leucine 111, leucine 130–leucine 150, leucine 158–methionine 178, and alanine 183–isoleucine 203.

Belongs to the ATPase A chain family. As to quaternary structure, component of the ATP synthase complex composed at least of ATP5F1A/subunit alpha, ATP5F1B/subunit beta, ATP5MC1/subunit c (homooctomer), MT-ATP6/subunit a, MT-ATP8/subunit 8, ATP5ME/subunit e, ATP5MF/subunit f, ATP5MG/subunit g, ATP5MK/subunit k, ATP5MJ/subunit j, ATP5F1C/subunit gamma, ATP5F1D/subunit delta, ATP5F1E/subunit epsilon, ATP5PF/subunit F6, ATP5PB/subunit b, ATP5PD/subunit d, ATP5PO/subunit OSCP. ATP synthase complex consists of a soluble F(1) head domain (subunits alpha(3) and beta(3)) - the catalytic core - and a membrane F(0) domain - the membrane proton channel (subunits c, a, 8, e, f, g, k and j). These two domains are linked by a central stalk (subunits gamma, delta, and epsilon) rotating inside the F1 region and a stationary peripheral stalk (subunits F6, b, d, and OSCP). Interacts with DNAJC30; interaction is direct.

It localises to the mitochondrion inner membrane. The enzyme catalyses H(+)(in) = H(+)(out). In terms of biological role, subunit a, of the mitochondrial membrane ATP synthase complex (F(1)F(0) ATP synthase or Complex V) that produces ATP from ADP in the presence of a proton gradient across the membrane which is generated by electron transport complexes of the respiratory chain. ATP synthase complex consist of a soluble F(1) head domain - the catalytic core - and a membrane F(1) domain - the membrane proton channel. These two domains are linked by a central stalk rotating inside the F(1) region and a stationary peripheral stalk. During catalysis, ATP synthesis in the catalytic domain of F(1) is coupled via a rotary mechanism of the central stalk subunits to proton translocation. With the subunit c (ATP5MC1), forms the proton-conducting channel in the F(0) domain, that contains two crucial half-channels (inlet and outlet) that facilitate proton movement from the mitochondrial intermembrane space (IMS) into the matrix. Protons are taken up via the inlet half-channel and released through the outlet half-channel, following a Grotthuss mechanism. The chain is ATP synthase F(0) complex subunit a from Latimeria chalumnae (Coelacanth).